Consider the following 210-residue polypeptide: uncharacterized protein (210 aa).

Residues 2 to 91 form the CS domain; the sequence is SRHPEVKWAQ…AEAKWWKKLV (90 aa). Positions 165-210 are disordered; that stretch reads GMGGMGGMDEFEDESDDEEEVSKPQDAEKAAEAGKSQESDAKTETS. Residues 173–184 show a composition bias toward acidic residues; the sequence is DEFEDESDDEEE. The span at 185 to 210 shows a compositional bias: basic and acidic residues; sequence VSKPQDAEKAAEAGKSQESDAKTETS.

This is an uncharacterized protein from Oryza sativa subsp. indica (Rice).